The primary structure comprises 294 residues: Proline iminopeptidase (294 aa).

Residues 27–277 (PPLVLLHGGP…GCGHMSFVEK (251 aa)) enclose the AB hydrolase-1 domain. Serine 105 functions as the Nucleophile in the catalytic mechanism. Aspartate 244 is an active-site residue. Residue histidine 271 is the Proton donor of the active site.

It belongs to the peptidase S33 family.

It is found in the cell envelope. The catalysed reaction is Release of N-terminal proline from a peptide.. Its function is as follows. Releases the N-terminal proline from various substrates. In Lactobacillus helveticus (strain DPC 4571), this protein is Proline iminopeptidase.